A 336-amino-acid chain; its full sequence is DNA repair protein RAD51 homolog A (336 aa).

A HhH domain is found at 45–74 (TVEAVAYAPKKELLNIKGISEAKAEKILAE). Position 124–131 (124–131 (GEFRTGKT)) interacts with ATP. Residues 242 to 257 (LARFLRMLLRLADEFG) carry the Nuclear export signal motif.

It belongs to the RecA family. RAD51 subfamily. Forms linear homooligomers, giving rise to a RAD51 nucleoprotein filament, which is essential for strand-pairing reactions during DNA recombination.

The protein resides in the nucleus. It is found in the cytoplasm. Its subcellular location is the chromosome. Functionally, plays an important role in homologous strand exchange, a key step in DNA repair through homologous recombination (HR). Binds to single-stranded DNA in an ATP-dependent manner to form nucleoprotein filaments which are essential for the homology search and strand exchange. Catalyzes the recognition of homology and strand exchange between homologous DNA partners to form a joint molecule between a processed DNA break and the repair template. Recruited to resolve stalled replication forks during replication stress. Also involved in interstrand cross-link repair. The protein is DNA repair protein RAD51 homolog A (rad51-a) of Xenopus laevis (African clawed frog).